Here is a 919-residue protein sequence, read N- to C-terminus: Aminodeoxychorismate synthase, chloroplastic (919 aa).

A chloroplast-targeting transit peptide spans 1 to 45; the sequence is MNMNFSFCSTSSELSYPSENVLRFSVASRLFSPKWKKSFISLPCR. Residues 86 to 342 form the Glutamine amidotransferase type-1 domain; that stretch reads RTLLIDNYDS…KDITVNYWSR (257 aa). Cysteine 172 serves as the catalytic Nucleophile. Active-site residues include histidine 316 and glutamate 318. A PABB component region spans residues 436–910; it reads IFMELFGKNR…KTRAPANAVM (475 aa).

The protein in the C-terminal section; belongs to the anthranilate synthase component I family.

It is found in the plastid. The protein localises to the chloroplast. The catalysed reaction is chorismate + L-glutamine = 4-amino-4-deoxychorismate + L-glutamate. Its pathway is cofactor biosynthesis; tetrahydrofolate biosynthesis; 4-aminobenzoate from chorismate: step 1/2. With respect to regulation, activated by chorismate and inhibited by dihydrofolate and methotrexate. In terms of biological role, bifunctional enzyme that catalyzes the biosynthesis of 4-amino-4-deoxychorismate (ADC) from chorismate and glutamine. In the first step, a glutamine amidotransferase generates ammonia that is channelled between the binding sites of glutamine and chorismate and used along with chorismate in the second step, catalyzed by aminodeoxychorismate synthase, to produce ADC. Required for the synthesis of 4-aminobenzoate (PABA), an important component in tetrahydrofolate biosynthesis. Does not possess ADC lyase activity. This Arabidopsis thaliana (Mouse-ear cress) protein is Aminodeoxychorismate synthase, chloroplastic (ADCS).